The chain runs to 460 residues: Bifunctional protein GlmU (460 aa).

Residues 1–235 (MALSAAIVLA…PLTVEGVNDR (235 aa)) form a pyrophosphorylase region. UDP-N-acetyl-alpha-D-glucosamine is bound by residues 9 to 12 (LAAG), lysine 23, glutamine 76, and 81 to 82 (GT). Aspartate 109 contributes to the Mg(2+) binding site. The UDP-N-acetyl-alpha-D-glucosamine site is built by glycine 146, glutamate 161, asparagine 176, and asparagine 233. Asparagine 233 is a binding site for Mg(2+). The interval 236 to 256 (VQLAALSKTYNRRVCERWMRD) is linker. The tract at residues 257-460 (GVTILDPETT…VEGWKPAWER (204 aa)) is N-acetyltransferase. Arginine 338 and lysine 356 together coordinate UDP-N-acetyl-alpha-D-glucosamine. The Proton acceptor role is filled by histidine 368. The UDP-N-acetyl-alpha-D-glucosamine site is built by tyrosine 371 and asparagine 382. Residues 391 to 392 (NY) and alanine 428 each bind acetyl-CoA.

In the N-terminal section; belongs to the N-acetylglucosamine-1-phosphate uridyltransferase family. The protein in the C-terminal section; belongs to the transferase hexapeptide repeat family. In terms of assembly, homotrimer. The cofactor is Mg(2+).

Its subcellular location is the cytoplasm. The enzyme catalyses alpha-D-glucosamine 1-phosphate + acetyl-CoA = N-acetyl-alpha-D-glucosamine 1-phosphate + CoA + H(+). It catalyses the reaction N-acetyl-alpha-D-glucosamine 1-phosphate + UTP + H(+) = UDP-N-acetyl-alpha-D-glucosamine + diphosphate. It participates in nucleotide-sugar biosynthesis; UDP-N-acetyl-alpha-D-glucosamine biosynthesis; N-acetyl-alpha-D-glucosamine 1-phosphate from alpha-D-glucosamine 6-phosphate (route II): step 2/2. The protein operates within nucleotide-sugar biosynthesis; UDP-N-acetyl-alpha-D-glucosamine biosynthesis; UDP-N-acetyl-alpha-D-glucosamine from N-acetyl-alpha-D-glucosamine 1-phosphate: step 1/1. It functions in the pathway bacterial outer membrane biogenesis; LPS lipid A biosynthesis. Functionally, catalyzes the last two sequential reactions in the de novo biosynthetic pathway for UDP-N-acetylglucosamine (UDP-GlcNAc). The C-terminal domain catalyzes the transfer of acetyl group from acetyl coenzyme A to glucosamine-1-phosphate (GlcN-1-P) to produce N-acetylglucosamine-1-phosphate (GlcNAc-1-P), which is converted into UDP-GlcNAc by the transfer of uridine 5-monophosphate (from uridine 5-triphosphate), a reaction catalyzed by the N-terminal domain. This chain is Bifunctional protein GlmU, found in Bifidobacterium longum (strain DJO10A).